A 672-amino-acid chain; its full sequence is DNA ligase (672 aa).

Residues 35 to 39 (DAQYD), 84 to 85 (SL), and E115 contribute to the NAD(+) site. Residue K117 is the N6-AMP-lysine intermediate of the active site. The NAD(+) site is built by R138, E178, K294, and K318. Residues C412, C415, C430, and C435 each coordinate Zn(2+). Positions 592–672 (ATGGPFVGKS…AFLQMLQTNA (81 aa)) constitute a BRCT domain.

Belongs to the NAD-dependent DNA ligase family. LigA subfamily. It depends on Mg(2+) as a cofactor. Requires Mn(2+) as cofactor.

It carries out the reaction NAD(+) + (deoxyribonucleotide)n-3'-hydroxyl + 5'-phospho-(deoxyribonucleotide)m = (deoxyribonucleotide)n+m + AMP + beta-nicotinamide D-nucleotide.. Functionally, DNA ligase that catalyzes the formation of phosphodiester linkages between 5'-phosphoryl and 3'-hydroxyl groups in double-stranded DNA using NAD as a coenzyme and as the energy source for the reaction. It is essential for DNA replication and repair of damaged DNA. The protein is DNA ligase of Myxococcus xanthus (strain DK1622).